A 658-amino-acid chain; its full sequence is Biosynthetic arginine decarboxylase (658 aa).

Lysine 127 is subject to N6-(pyridoxal phosphate)lysine. 307–317 contacts substrate; the sequence is FDVGGGLGVDY.

This sequence belongs to the Orn/Lys/Arg decarboxylase class-II family. SpeA subfamily. Homotetramer. It depends on Mg(2+) as a cofactor. The cofactor is pyridoxal 5'-phosphate.

It is found in the periplasm. The catalysed reaction is L-arginine + H(+) = agmatine + CO2. The protein operates within amine and polyamine biosynthesis; agmatine biosynthesis; agmatine from L-arginine: step 1/1. In terms of biological role, catalyzes the biosynthesis of agmatine from arginine. The protein is Biosynthetic arginine decarboxylase (speA) of Escherichia coli O157:H7.